The primary structure comprises 512 residues: GMP synthase [glutamine-hydrolyzing] (512 aa).

A Glutamine amidotransferase type-1 domain is found at 7–197; the sequence is TIIVLDFGSQ…VFGVCGCSEG (191 aa). Cys84 acts as the Nucleophile in catalysis. Active-site residues include His171 and Glu173. The GMPS ATP-PPase domain maps to 198 to 387; sequence WNMENFIEVE…LGIPDEIVWR (190 aa). Residue 225 to 231 participates in ATP binding; that stretch reads SGGVDSS.

Homodimer.

It carries out the reaction XMP + L-glutamine + ATP + H2O = GMP + L-glutamate + AMP + diphosphate + 2 H(+). The protein operates within purine metabolism; GMP biosynthesis; GMP from XMP (L-Gln route): step 1/1. Functionally, catalyzes the synthesis of GMP from XMP. The protein is GMP synthase [glutamine-hydrolyzing] of Bacillus anthracis.